The following is a 130-amino-acid chain: Small ribosomal subunit protein uS8 (130 aa).

It belongs to the universal ribosomal protein uS8 family. In terms of assembly, part of the 30S ribosomal subunit. Contacts proteins S5 and S12.

In terms of biological role, one of the primary rRNA binding proteins, it binds directly to 16S rRNA central domain where it helps coordinate assembly of the platform of the 30S subunit. This is Small ribosomal subunit protein uS8 from Pseudoalteromonas translucida (strain TAC 125).